Reading from the N-terminus, the 119-residue chain is NADH-quinone oxidoreductase subunit 7 (119 aa).

Helical transmembrane passes span 11 to 31, 59 to 79, and 88 to 108; these read LIYV…GALL, VHFY…AFLW, and LGLY…VGFL.

This sequence belongs to the complex I subunit 3 family. As to quaternary structure, NDH-1 is composed of 15 different subunits, Nqo1 to Nqo15. The complex has a L-shaped structure, with the hydrophobic arm (subunits Nqo7, Nqo8 and Nqo10 to Nqo14) embedded in the membrane and the hydrophilic peripheral arm (subunits Nqo1 to Nqo6, Nqo9 and Nqo15) protruding into the bacterial cytoplasm. The hydrophilic domain contains all the redox centers.

It localises to the cell inner membrane. It carries out the reaction a quinone + NADH + 5 H(+)(in) = a quinol + NAD(+) + 4 H(+)(out). Functionally, NDH-1 shuttles electrons from NADH, via FMN and iron-sulfur (Fe-S) centers, to quinones in the respiratory chain. The immediate electron acceptor for the enzyme in this species is menaquinone. Couples the redox reaction to proton translocation (for every two electrons transferred, four hydrogen ions are translocated across the cytoplasmic membrane), and thus conserves the redox energy in a proton gradient required for the synthesis of ATP. This chain is NADH-quinone oxidoreductase subunit 7 (nqo7), found in Thermus thermophilus (strain ATCC 27634 / DSM 579 / HB8).